The sequence spans 38 residues: Photosystem II reaction center protein L (38 aa).

A helical membrane pass occupies residues 17-37; it reads SLYWGLLLIFVLAVSFSNYFF.

It belongs to the PsbL family. As to quaternary structure, PSII is composed of 1 copy each of membrane proteins PsbA, PsbB, PsbC, PsbD, PsbE, PsbF, PsbH, PsbI, PsbJ, PsbK, PsbL, PsbM, PsbT, PsbX, PsbY, PsbZ, Psb30/Ycf12, at least 3 peripheral proteins of the oxygen-evolving complex and a large number of cofactors. It forms dimeric complexes.

Its subcellular location is the plastid. It localises to the chloroplast thylakoid membrane. In terms of biological role, one of the components of the core complex of photosystem II (PSII). PSII is a light-driven water:plastoquinone oxidoreductase that uses light energy to abstract electrons from H(2)O, generating O(2) and a proton gradient subsequently used for ATP formation. It consists of a core antenna complex that captures photons, and an electron transfer chain that converts photonic excitation into a charge separation. This subunit is found at the monomer-monomer interface and is required for correct PSII assembly and/or dimerization. This chain is Photosystem II reaction center protein L, found in Amborella trichopoda.